Here is a 650-residue protein sequence, read N- to C-terminus: Acetyl-coenzyme A synthetase (650 aa).

Residues Arg-191 to Arg-194, Thr-311, and Asn-335 each bind CoA. Residues Gly-387–Pro-389, Asp-411–Thr-416, Asp-501, and Arg-516 each bind ATP. Ser-524 is a CoA binding site. Arg-527 is a binding site for ATP. 3 residues coordinate Mg(2+): Val-538, His-540, and Ile-543. Residue Arg-585 participates in CoA binding. N6-acetyllysine is present on Lys-610.

This sequence belongs to the ATP-dependent AMP-binding enzyme family. The cofactor is Mg(2+). In terms of processing, acetylated. Deacetylation by the SIR2-homolog deacetylase activates the enzyme.

The enzyme catalyses acetate + ATP + CoA = acetyl-CoA + AMP + diphosphate. Its function is as follows. Catalyzes the conversion of acetate into acetyl-CoA (AcCoA), an essential intermediate at the junction of anabolic and catabolic pathways. AcsA undergoes a two-step reaction. In the first half reaction, AcsA combines acetate with ATP to form acetyl-adenylate (AcAMP) intermediate. In the second half reaction, it can then transfer the acetyl group from AcAMP to the sulfhydryl group of CoA, forming the product AcCoA. This chain is Acetyl-coenzyme A synthetase, found in Vibrio vulnificus (strain CMCP6).